Consider the following 202-residue polypeptide: Probable ATP-dependent Clp protease proteolytic subunit 3 (202 aa).

Ser101 functions as the Nucleophile in the catalytic mechanism. Residue His126 is part of the active site.

It belongs to the peptidase S14 family. In terms of assembly, fourteen ClpP subunits assemble into 2 heptameric rings which stack back to back to give a disk-like structure with a central cavity, resembling the structure of eukaryotic proteasomes.

Its subcellular location is the cytoplasm. The catalysed reaction is Hydrolysis of proteins to small peptides in the presence of ATP and magnesium. alpha-casein is the usual test substrate. In the absence of ATP, only oligopeptides shorter than five residues are hydrolyzed (such as succinyl-Leu-Tyr-|-NHMec, and Leu-Tyr-Leu-|-Tyr-Trp, in which cleavage of the -Tyr-|-Leu- and -Tyr-|-Trp bonds also occurs).. Cleaves peptides in various proteins in a process that requires ATP hydrolysis. Has a chymotrypsin-like activity. Plays a major role in the degradation of misfolded proteins. The sequence is that of Probable ATP-dependent Clp protease proteolytic subunit 3 from Synechocystis sp. (strain ATCC 27184 / PCC 6803 / Kazusa).